Reading from the N-terminus, the 307-residue chain is Protein pxr1 (307 aa).

Residues 1–11 show a composition bias toward basic residues; sequence MGLAAPRKKTK. 2 disordered regions span residues 1-25 and 144-234; these read MGLA…SRST and NATA…SDCD. Over residues 15–25 the composition is skewed to polar residues; sequence DPNNTSWSRST. The 55-residue stretch at 25–79 folds into the G-patch domain; the sequence is TDGFGHRILKAQGWTPGGFLGARNATHSDLFTTASASHIRVVLKDDTLGLGARPK. Composition is skewed to basic and acidic residues over residues 154–168 and 206–221; these read LRVD…HESE and GKEL…EKKQ.

It belongs to the PINX1 family.

It localises to the nucleus. Its subcellular location is the nucleolus. Involved in rRNA-processing at A0, A1 and A2 sites and negatively regulates telomerase. This Neosartorya fischeri (strain ATCC 1020 / DSM 3700 / CBS 544.65 / FGSC A1164 / JCM 1740 / NRRL 181 / WB 181) (Aspergillus fischerianus) protein is Protein pxr1 (pxr1).